A 330-amino-acid chain; its full sequence is Tryptophan--tRNA ligase (330 aa).

ATP contacts are provided by residues 10-12 (QPS) and 18-19 (GN). Residues 11–19 (PSGTLTLGN) carry the 'HIGH' region motif. Asp133 is an L-tryptophan binding site. ATP is bound by residues 145-147 (GED), Ile184, and 193-197 (KMSKS). The short motif at 193–197 (KMSKS) is the 'KMSKS' region element.

Belongs to the class-I aminoacyl-tRNA synthetase family. In terms of assembly, homodimer.

It is found in the cytoplasm. The enzyme catalyses tRNA(Trp) + L-tryptophan + ATP = L-tryptophyl-tRNA(Trp) + AMP + diphosphate + H(+). Its function is as follows. Catalyzes the attachment of tryptophan to tRNA(Trp). This Halalkalibacterium halodurans (strain ATCC BAA-125 / DSM 18197 / FERM 7344 / JCM 9153 / C-125) (Bacillus halodurans) protein is Tryptophan--tRNA ligase.